The sequence spans 56 residues: Large ribosomal subunit protein bL32 (56 aa).

Residues 1–28 (MAVQQNRKTRSKRGMRRSHDALTTAALS) form a disordered region. Residues 7–16 (RKTRSKRGMR) are compositionally biased toward basic residues.

It belongs to the bacterial ribosomal protein bL32 family.

This chain is Large ribosomal subunit protein bL32, found in Vibrio vulnificus (strain CMCP6).